A 213-amino-acid chain; its full sequence is Ribosomal RNA large subunit methyltransferase E (213 aa).

Positions 59, 61, 79, 97, and 121 each coordinate S-adenosyl-L-methionine. The active-site Proton acceptor is K161.

The protein belongs to the class I-like SAM-binding methyltransferase superfamily. RNA methyltransferase RlmE family.

The protein localises to the cytoplasm. It catalyses the reaction uridine(2552) in 23S rRNA + S-adenosyl-L-methionine = 2'-O-methyluridine(2552) in 23S rRNA + S-adenosyl-L-homocysteine + H(+). Functionally, specifically methylates the uridine in position 2552 of 23S rRNA at the 2'-O position of the ribose in the fully assembled 50S ribosomal subunit. This Myxococcus xanthus (strain DK1622) protein is Ribosomal RNA large subunit methyltransferase E.